Here is a 370-residue protein sequence, read N- to C-terminus: Galactose-1-phosphate uridylyltransferase (370 aa).

2 residues coordinate Zn(2+): cysteine 51 and cysteine 54. Residues alanine 60 and 76-77 each bind UDP-alpha-D-glucose; that span reads NG. Position 121 (histidine 121) interacts with Zn(2+). Asparagine 166 contacts UDP-alpha-D-glucose. A Zn(2+)-binding site is contributed by histidine 177. The active-site Tele-UMP-histidine intermediate is histidine 179. Glutamine 181 lines the UDP-alpha-D-glucose pocket. Fe cation-binding residues include glutamate 195, histidine 294, histidine 311, and histidine 313. Residues 326–329 and 331–332 each bind UDP-alpha-D-glucose; these read KFLV and FE.

This sequence belongs to the galactose-1-phosphate uridylyltransferase type 1 family. As to quaternary structure, homodimer. Requires Zn(2+) as cofactor.

The catalysed reaction is alpha-D-galactose 1-phosphate + UDP-alpha-D-glucose = alpha-D-glucose 1-phosphate + UDP-alpha-D-galactose. It participates in carbohydrate metabolism; galactose metabolism. The protein is Galactose-1-phosphate uridylyltransferase (GAL7) of Kluyveromyces lactis (strain ATCC 8585 / CBS 2359 / DSM 70799 / NBRC 1267 / NRRL Y-1140 / WM37) (Yeast).